The sequence spans 171 residues: Small ribosomal subunit protein uS5 (171 aa).

The S5 DRBM domain occupies 16–79 (LIEKIVFINR…ERARKDMALV (64 aa)).

The protein belongs to the universal ribosomal protein uS5 family. Part of the 30S ribosomal subunit. Contacts proteins S4 and S8.

With S4 and S12 plays an important role in translational accuracy. Functionally, located at the back of the 30S subunit body where it stabilizes the conformation of the head with respect to the body. The polypeptide is Small ribosomal subunit protein uS5 (Desulfotalea psychrophila (strain LSv54 / DSM 12343)).